The following is a 297-amino-acid chain: Urease accessory protein UreD 2 (297 aa).

The protein belongs to the UreD family. As to quaternary structure, ureD, UreF and UreG form a complex that acts as a GTP-hydrolysis-dependent molecular chaperone, activating the urease apoprotein by helping to assemble the nickel containing metallocenter of UreC. The UreE protein probably delivers the nickel.

The protein resides in the cytoplasm. Its function is as follows. Required for maturation of urease via the functional incorporation of the urease nickel metallocenter. In Methylorubrum populi (strain ATCC BAA-705 / NCIMB 13946 / BJ001) (Methylobacterium populi), this protein is Urease accessory protein UreD 2.